The sequence spans 652 residues: Acetyl-coenzyme A synthetase (652 aa).

CoA is bound by residues 191–194 (RAGR), T311, and N335. ATP contacts are provided by residues 387-389 (GEP), 411-416 (DTWWQT), D500, and R515. S523 provides a ligand contact to CoA. R526 contributes to the ATP binding site. Positions 537, 539, and 542 each coordinate Mg(2+). A CoA-binding site is contributed by R584. K609 is modified (N6-acetyllysine).

It belongs to the ATP-dependent AMP-binding enzyme family. Requires Mg(2+) as cofactor. Acetylated. Deacetylation by the SIR2-homolog deacetylase activates the enzyme.

It catalyses the reaction acetate + ATP + CoA = acetyl-CoA + AMP + diphosphate. In terms of biological role, catalyzes the conversion of acetate into acetyl-CoA (AcCoA), an essential intermediate at the junction of anabolic and catabolic pathways. Acs undergoes a two-step reaction. In the first half reaction, Acs combines acetate with ATP to form acetyl-adenylate (AcAMP) intermediate. In the second half reaction, it can then transfer the acetyl group from AcAMP to the sulfhydryl group of CoA, forming the product AcCoA. Functionally, enables the cell to use acetate during aerobic growth to generate energy via the TCA cycle, and biosynthetic compounds via the glyoxylate shunt. Acetylates CheY, the response regulator involved in flagellar movement and chemotaxis. This Sodalis glossinidius (strain morsitans) protein is Acetyl-coenzyme A synthetase.